The primary structure comprises 61 residues: Small ribosomal subunit protein uS14 (61 aa).

Zn(2+)-binding residues include Cys24, Cys27, Cys40, and Cys43.

The protein belongs to the universal ribosomal protein uS14 family. Zinc-binding uS14 subfamily. Part of the 30S ribosomal subunit. Contacts proteins S3 and S10. The cofactor is Zn(2+).

In terms of biological role, binds 16S rRNA, required for the assembly of 30S particles and may also be responsible for determining the conformation of the 16S rRNA at the A site. This Brevibacillus brevis (strain 47 / JCM 6285 / NBRC 100599) protein is Small ribosomal subunit protein uS14.